The following is a 1481-amino-acid chain: Structural protein ORF147 (1481 aa).

Disordered regions lie at residues 65–88 (AEKRAEITKGSQKKSNSSSSENLE) and 1319–1403 (DEKL…PPIP). 3 stretches are compositionally biased toward low complexity: residues 73 to 84 (KGSQKKSNSSSS), 1323 to 1336 (SSTVSSSSSSSPKT), and 1393 to 1403 (SSRTTITPPIP).

The protein resides in the virion. The chain is Structural protein ORF147 from Noctuidae (owlet moths).